The primary structure comprises 301 residues: GTPase Era (301 aa).

In terms of domain architecture, Era-type G spans 7–173 (KSGFVALLGR…LNTINKYLPE (167 aa)). The interval 15–22 (GRPNVGKS) is G1. 15-22 (GRPNVGKS) contacts GTP. Positions 41-45 (QTTRN) are G2. Positions 62–65 (DTPG) are G3. GTP contacts are provided by residues 62–66 (DTPGI) and 123–126 (NKVD). The G4 stretch occupies residues 123–126 (NKVD). Residues 152–154 (ISA) form a G5 region. In terms of domain architecture, KH type-2 spans 204 to 281 (TSQEVPHATA…NLRLWVKVQH (78 aa)).

The protein belongs to the TRAFAC class TrmE-Era-EngA-EngB-Septin-like GTPase superfamily. Era GTPase family. As to quaternary structure, monomer.

The protein localises to the cytoplasm. Its subcellular location is the cell membrane. Its function is as follows. An essential GTPase that binds both GDP and GTP, with rapid nucleotide exchange. Plays a role in 16S rRNA processing and 30S ribosomal subunit biogenesis and possibly also in cell cycle regulation and energy metabolism. The sequence is that of GTPase Era from Lactobacillus helveticus (strain DPC 4571).